The primary structure comprises 177 residues: Adenylyl-sulfate kinase (177 aa).

12–19 (GLSGAGKT) provides a ligand contact to ATP. Serine 86 (phosphoserine intermediate) is an active-site residue.

Belongs to the APS kinase family.

It catalyses the reaction adenosine 5'-phosphosulfate + ATP = 3'-phosphoadenylyl sulfate + ADP + H(+). It functions in the pathway sulfur metabolism; hydrogen sulfide biosynthesis; sulfite from sulfate: step 2/3. Functionally, catalyzes the synthesis of activated sulfate. This Picosynechococcus sp. (strain ATCC 27264 / PCC 7002 / PR-6) (Agmenellum quadruplicatum) protein is Adenylyl-sulfate kinase.